Here is a 625-residue protein sequence, read N- to C-terminus: Endoglucanase 13 (625 aa).

Positions 1–34 are cleaved as a signal peptide; it reads MAATMNKTPATTFLLIPAAASLVLLLAAAASVEA. The Nucleophile role is filled by D91. H427 is a catalytic residue. N440 carries N-linked (GlcNAc...) asparagine glycosylation. Residues D479 and E488 contribute to the active site. Residues 509–530 form a disordered region; that stretch reads ADNTPEYTPAPNAPSPSNGGSP.

It belongs to the glycosyl hydrolase 9 (cellulase E) family.

The protein resides in the secreted. The enzyme catalyses Endohydrolysis of (1-&gt;4)-beta-D-glucosidic linkages in cellulose, lichenin and cereal beta-D-glucans.. The chain is Endoglucanase 13 (GLU6) from Oryza sativa subsp. indica (Rice).